The sequence spans 224 residues: Uracil phosphoribosyltransferase (224 aa).

38–42 (KGLVK) is a GTP binding site. Residues Arg87, Arg112, and 140–148 (DPMIATGST) contribute to the 5-phospho-alpha-D-ribose 1-diphosphate site. Residues Ile204 and 209-211 (GDA) each bind uracil. Asp210 is a binding site for 5-phospho-alpha-D-ribose 1-diphosphate.

Belongs to the UPRTase family. Mg(2+) serves as cofactor.

It carries out the reaction UMP + diphosphate = 5-phospho-alpha-D-ribose 1-diphosphate + uracil. Its pathway is pyrimidine metabolism; UMP biosynthesis via salvage pathway; UMP from uracil: step 1/1. Allosterically activated by GTP. Its function is as follows. Catalyzes the conversion of uracil and 5-phospho-alpha-D-ribose 1-diphosphate (PRPP) to UMP and diphosphate. This Thermococcus gammatolerans (strain DSM 15229 / JCM 11827 / EJ3) protein is Uracil phosphoribosyltransferase.